The primary structure comprises 153 residues: Methylglyoxal synthase (153 aa).

In terms of domain architecture, MGS-like spans 6-153; sequence RTIAARKHIA…QRYLAERLPS (148 aa). Substrate is bound by residues His19, Lys23, 45-48, and 65-66; these read TGTT and SG. The active-site Proton donor/acceptor is Asp71. Residue His98 participates in substrate binding.

This sequence belongs to the methylglyoxal synthase family.

It catalyses the reaction dihydroxyacetone phosphate = methylglyoxal + phosphate. In terms of biological role, catalyzes the formation of methylglyoxal from dihydroxyacetone phosphate. The sequence is that of Methylglyoxal synthase from Sodalis glossinidius (strain morsitans).